Here is a 443-residue protein sequence, read N- to C-terminus: Diels-Alderase poxQ (443 aa).

The first 23 residues, 1–23 (MARIPLEFLSITLPVLLLAYCLA), serve as a signal peptide directing secretion. Residues N78, N97, and N145 are each glycosylated (N-linked (GlcNAc...) asparagine).

This sequence belongs to the Diels-Alderase family.

It functions in the pathway secondary metabolite biosynthesis. Its function is as follows. Diels-Alderase; part of the gene cluster that mediates the biosynthesis of oxaleimides, cytotoxic compounds containing an unusual disubstituted succinimide moiety. The first step of the pathway is provided by the HR-PKS poxF that serves in a new mode of collaborative biosynthesis with the PKS-NRPS poxE, by providing the olefin containing amino acid substrate via the synthesis of an ACP-bound dec-4-enoate. The cytochrome P450 monooxygenase poxM-catalyzed oxidation at the alpha-position creates the enzyme-bound 2-hydroxydec-4-enoyl-ACP thioester, which may be prone to spontaneous hydrolysis to yield 2-hydroxydec-4-enoic acid due to increased electrophilicity of the carbonyl. 2-hydroxydec-4-enoic acid can then be further oxidized by poxM to yield the alpha-ketoacid 2-oxodec-4-enoicacid, which is reductively aminated by the aminotransferase poxL to yield (S,E)-2-aminodec-4-enoic acid. The Hybrid PKS-NRPS synthetase poxE then performs condensation between the octaketide product of its PKS modules and the amino group of (S,E)-2-aminodec-4-enoic acid which is activated and incorporated by the adenylation domain. The resulting aminoacyl product can be cyclized by the Diels-Alderase PoxQ and reductively released by the reductive (R) domain of poxE to yield an aldehyde intermediate. The released aldehyde is then substrate for a Knoevenagel condensation by the hydrolyase poxO followed by an oxidation at the 5-position of the pyrrolidone ring. The presence of the olefin from the amino acid building block allows for migration of the substituted allyl group to occur. This allylic transposition reaction takes place in a conjugate addition, semipinacol-like fashion to yield a succinimide intermediate. Iterative two-electron oxidations of the C7 methyl of the succinimide intermediate to the carboxylic acid can be catalyzed by one of two remaining cytochrome P450 monooxygenasess poxC or poxD to yield oxaleimide A. Subsequent oxidation yields the maleimide scaffold oxaleimide I. Both oxaleimide A and oxaleimide I can undergo oxidative modifications in the decalin ring to yield the series of products oxaleimides B to H. The sequence is that of Diels-Alderase poxQ from Penicillium oxalicum.